The primary structure comprises 499 residues: MIANLVSMETDLAMNIGLDTSGEAPTALPPMPNVTETLWDLAMVVSQSTQWPLLDTGSSENFSELVTTETPYVPYGRRPETYIVPILFALIFVVGVLGNGTLIVVFLSVRQMRNVPNTYILSLALADLLVIITTVPLASTVYTVEYWPYGSFLCSLSEFMKDVSIGVSVFTLTALSGDRYFAIVDPLRKFHAHGGGRRATRMTLATAVSIWLLAILCGLPALIGSNLKHLGINEKSIVICYPYPEEWGINYAKSMVLLHFLVYYAIPLVVIAVFYVLIALHLMYSASVPGEIQGAVRQVRARRKVAVTVLAFVVIFGICFLPYHVFFLWFYFWPTAQDDYNAFWHVLRIVAYCMSFANSCANPVALYFVSGAFRKHFNRYLFCRGASGRRKKRGQHDTFCMHRDTSLTSTASKRFQSRHSCYQSTIRSCRLQETTITTLPNGGNQNGANISAVELALPVLQAPGHNEAHAPPSYGFLPLNEIVQQTRSSPAKFQESLLN.

Residues 1-85 (MIANLVSMET…GRRPETYIVP (85 aa)) lie on the Extracellular side of the membrane. N-linked (GlcNAc...) asparagine glycans are attached at residues Asn33 and Asn61. A helical membrane pass occupies residues 86–106 (ILFALIFVVGVLGNGTLIVVF). The Cytoplasmic segment spans residues 107-117 (LSVRQMRNVPN). Residues 118-138 (TYILSLALADLLVIITTVPLA) traverse the membrane as a helical segment. The Extracellular segment spans residues 139–162 (STVYTVEYWPYGSFLCSLSEFMKD). A disulfide bond links Cys154 and Cys240. Residues 163-183 (VSIGVSVFTLTALSGDRYFAI) form a helical membrane-spanning segment. At 184–203 (VDPLRKFHAHGGGRRATRMT) the chain is on the cytoplasmic side. A helical membrane pass occupies residues 204-224 (LATAVSIWLLAILCGLPALIG). Residues 225–259 (SNLKHLGINEKSIVICYPYPEEWGINYAKSMVLLH) lie on the Extracellular side of the membrane. A helical membrane pass occupies residues 260-280 (FLVYYAIPLVVIAVFYVLIAL). Residues 281–309 (HLMYSASVPGEIQGAVRQVRARRKVAVTV) lie on the Cytoplasmic side of the membrane. The chain crosses the membrane as a helical span at residues 310 to 330 (LAFVVIFGICFLPYHVFFLWF). Topologically, residues 331-348 (YFWPTAQDDYNAFWHVLR) are extracellular. Residues 349-369 (IVAYCMSFANSCANPVALYFV) form a helical membrane-spanning segment. At 370 to 499 (SGAFRKHFNR…PAKFQESLLN (130 aa)) the chain is on the cytoplasmic side.

The protein belongs to the G-protein coupled receptor 1 family. As to expression, low levels in larval brain and gut with higher levels in adult brain and gut. In the brain expression is widely distributed, including strong expression in the mushroom bodies. Expressed weakly in s-LNv (small ventral lateral neurons) and strongly in l-LNv (large ventral lateral neurons), but not in other clock neurons.

It localises to the cell membrane. Its function is as follows. Receptor for the neuropeptide CCHamide-1. Plays a role in the modulation of starvation-induced olfactory behavior where starved flies show increased responsiveness to food odorants, repellants and pheromones. Contributes to regulation of sleep latency (the time required to fall asleep), amount of sleep and depth of sleep (arousability). Involved in modulation of PDP1 and PDF levels in s-LNv (small ventral lateral neurons) clock neurons in response to CCHa1 released by DN1a (anterior dorsal neurons 1) clock neurons, to regulate morning activity. In a subset of dopaminergic cells in the protocerebral anterior medial (PAM) cluster involved in suppressing arousability in response to CCHa1 secreted by gut enteroendocrine cells. This Drosophila melanogaster (Fruit fly) protein is Neuropeptide CCHamide-1 receptor.